The following is a 300-amino-acid chain: Ribosomal RNA small subunit methyltransferase H (300 aa).

S-adenosyl-L-methionine contacts are provided by residues 46-48, D65, F92, D107, and Q114; that span reads GGH.

Belongs to the methyltransferase superfamily. RsmH family.

It localises to the cytoplasm. The enzyme catalyses cytidine(1402) in 16S rRNA + S-adenosyl-L-methionine = N(4)-methylcytidine(1402) in 16S rRNA + S-adenosyl-L-homocysteine + H(+). Its function is as follows. Specifically methylates the N4 position of cytidine in position 1402 (C1402) of 16S rRNA. The sequence is that of Ribosomal RNA small subunit methyltransferase H from Prochlorococcus marinus (strain MIT 9515).